A 239-amino-acid chain; its full sequence is 1-(5-phosphoribosyl)-5-[(5-phosphoribosylamino)methylideneamino] imidazole-4-carboxamide isomerase (239 aa).

Residue aspartate 8 is the Proton acceptor of the active site. Residue aspartate 129 is the Proton donor of the active site.

The protein belongs to the HisA/HisF family.

It is found in the cytoplasm. It carries out the reaction 1-(5-phospho-beta-D-ribosyl)-5-[(5-phospho-beta-D-ribosylamino)methylideneamino]imidazole-4-carboxamide = 5-[(5-phospho-1-deoxy-D-ribulos-1-ylimino)methylamino]-1-(5-phospho-beta-D-ribosyl)imidazole-4-carboxamide. The protein operates within amino-acid biosynthesis; L-histidine biosynthesis; L-histidine from 5-phospho-alpha-D-ribose 1-diphosphate: step 4/9. The chain is 1-(5-phosphoribosyl)-5-[(5-phosphoribosylamino)methylideneamino] imidazole-4-carboxamide isomerase from Bacillus anthracis (strain A0248).